Consider the following 253-residue polypeptide: MISSSANVPRSGFYYFSQGWKLVSQPGIRRFVILPLLVNILLMGGAFWWLFTQLDTWIPALMSYVPEWLQWLSYILWPLAVISVLLIFGYFFSTLANWIAAPFNGLLAEQLEARLTGATPPDTGIFGIMKDLPRIMKREWQKLAWYLPRAIVLLILYFIPGVGQTVAPVLWFLFSAWMLAIQYCDYPFDNHKVPFKEMRMALRTRKVTNMQFGALTSLFTMIPVLNLFIMPVAVCGATAMWVDCYRDKHALWK.

4 helical membrane-spanning segments follow: residues 31–51 (FVIL…WWLF), 72–92 (LSYI…GYFF), 151–171 (IVLL…PVLW), and 222–242 (IPVL…AMWV).

This sequence belongs to the CysZ family.

The protein localises to the cell inner membrane. Its function is as follows. High affinity, high specificity proton-dependent sulfate transporter, which mediates sulfate uptake. Provides the sulfur source for the cysteine synthesis pathway. This Escherichia fergusonii (strain ATCC 35469 / DSM 13698 / CCUG 18766 / IAM 14443 / JCM 21226 / LMG 7866 / NBRC 102419 / NCTC 12128 / CDC 0568-73) protein is Sulfate transporter CysZ.